The primary structure comprises 613 residues: Probable potassium transport system protein Kup (613 aa).

Helical transmembrane passes span 38-58 (VLGVLSLLIWALLLIVTLKYL), 91-111 (WILVSLGLFGAALLYGDGMIT), 128-148 (PSFGPLVIPVTIAILAGLFLF), 159-179 (FFGPIILLWFTSIGLCGLVEI), 206-226 (FLVLGAVFLAVTGAEALYADM), 238-258 (WSLLVLPALLLNYFGQGAVLL), 270-290 (ALVPSWGIIPMVILATLATII), 328-348 (IYVPAANWALMFSTIALVAGF), 357-377 (AYGVAVTATMLISAVLFYYVA), 387-407 (GLNLLMGMFMLIDLSFFGASV), and 410-430 (LFHGAWFPLVIGFALFTLMLT).

This sequence belongs to the HAK/KUP transporter (TC 2.A.72) family.

Its subcellular location is the cell inner membrane. It carries out the reaction K(+)(in) + H(+)(in) = K(+)(out) + H(+)(out). Transport of potassium into the cell. Likely operates as a K(+):H(+) symporter. The polypeptide is Probable potassium transport system protein Kup (Chlorobaculum tepidum (strain ATCC 49652 / DSM 12025 / NBRC 103806 / TLS) (Chlorobium tepidum)).